We begin with the raw amino-acid sequence, 257 residues long: NH(3)-dependent NAD(+) synthetase (257 aa).

28–35 (GISGGVDS) lines the ATP pocket. A Mg(2+)-binding site is contributed by Asp-34. Residue Arg-109 participates in deamido-NAD(+) binding. Thr-129 contacts ATP. Glu-134 contributes to the Mg(2+) binding site. 2 residues coordinate deamido-NAD(+): Lys-142 and Asp-149. The ATP site is built by Lys-158 and Ser-180. 240–241 (HK) is a deamido-NAD(+) binding site.

This sequence belongs to the NAD synthetase family. Homodimer.

It catalyses the reaction deamido-NAD(+) + NH4(+) + ATP = AMP + diphosphate + NAD(+) + H(+). Its pathway is cofactor biosynthesis; NAD(+) biosynthesis; NAD(+) from deamido-NAD(+) (ammonia route): step 1/1. Its function is as follows. Catalyzes the ATP-dependent amidation of deamido-NAD to form NAD. Uses ammonia as a nitrogen source. In Pyrococcus furiosus (strain ATCC 43587 / DSM 3638 / JCM 8422 / Vc1), this protein is NH(3)-dependent NAD(+) synthetase.